The sequence spans 313 residues: Protein FixB (313 aa).

255-283 (LYLAVGISGQIQHMVGANASQTIFAINKD) is a binding site for FAD.

Belongs to the ETF alpha-subunit/FixB family. As to quaternary structure, heterodimer of FixA and FixB.

Its pathway is amine and polyamine metabolism; carnitine metabolism. In terms of biological role, required for anaerobic carnitine reduction. May bring reductant to CaiA. The chain is Protein FixB from Shigella dysenteriae serotype 1 (strain Sd197).